Consider the following 790-residue polypeptide: Tumor necrosis factor alpha-induced protein 3 (790 aa).

Position 2 is an N-acetylalanine (Ala2). The TRAF-binding stretch occupies residues 58–300 (PQFREIIHKA…LTDPENEMKE (243 aa)). The OTU domain occupies 92–263 (LVALKTNGDG…SHHFVPLVTL (172 aa)). Asp100 is an active-site residue. Cys103 serves as the catalytic Nucleophile. Interaction with ubiquitin regions lie at residues 157 to 159 (LCY), 190 to 192 (SLE), and 224 to 227 (FAPL). Catalysis depends on His256, which acts as the Proton acceptor. Positions 357–368 (QENSEQGRREGH) are enriched in basic and acidic residues. Residues 357 to 377 (QENSEQGRREGHAQNPMEPSV) are disordered. An interaction with TNIP1 region spans residues 369–775 (AQNPMEPSVP…ACDHFGNAKC (407 aa)). The A20-type 1 zinc finger occupies 381–416 (SLMDVKCETPNCPFFMSVNTQPLCHECSERRQKNQN). The tract at residues 386-453 (KCETPNCPFF…EPLAWNPEES (68 aa)) is interaction with RIPK1. The Zn(2+) site is built by Cys387, Cys392, Cys404, and Cys407. Disordered regions lie at residues 415–434 (QNKLPKLNSKPGPEGLPGMA) and 447–468 (AWNPEESTGGPHSAPPTAPSPF). The residue at position 459 (Ser459) is a Phosphoserine. 2 A20-type zinc fingers span residues 472–507 (ETTAMKCRSPGCPFTLNVQHNGFCERCHNARQLHAS) and 515–548 (HLDPGKCQACLQDVTRTFNGICSTCFKRTTAEAS). Zn(2+) is bound by residues Cys478, Cys483, Cys495, Cys498, Cys521, Cys524, Cys536, and Cys539. The disordered stretch occupies residues 550–583 (SLSTSLPPSCHQRSKSDPSRLVRSPSPHSCHRAG). A Phosphoserine modification is found at Ser575. Residues 601–636 (RTGTSKCRKAGCVYFGTPENKGFCTLCFIEYRENKH) form an A20-type 4 zinc finger. The interval 605–655 (SKCRKAGCVYFGTPENKGFCTLCFIEYRENKHFAAASGKVSPTASRFQNTI) is required for proteasomal degradation of UBE2N and UBE2D3, TRAF6 deubiquitination, and TAX1BP1 interaction with UBE2N. The sufficient for inhibitory activity of TNF-induced NF-kappa-B activity stretch occupies residues 606–790 (KCRKAGCVYF…ECFQFKQMYG (185 aa)). Zn(2+) contacts are provided by Cys607, Cys612, Cys624, and Cys627. Ser645 carries the phosphoserine modification. The A20-type 5 zinc-finger motif lies at 651-686 (FQNTIPCLGRECGTLGSTMFEGYCQKCFIEAQNQRF). Zn(2+) contacts are provided by Cys657, Cys662, Cys674, and Cys677. Residues 689–705 (AKRTEEQLRSSQRRDVP) show a composition bias toward basic and acidic residues. The segment at 689–712 (AKRTEEQLRSSQRRDVPRTTQSTS) is disordered. Residues 697 to 790 (RSSQRRDVPR…ECFQFKQMYG (94 aa)) form a required for lysosomal localization and for TRAF2 lysosomal degradation region. A20-type zinc fingers lie at residues 710 to 745 (STSRPKCARASCKNILACRSEELCMECQHPNQRMGP) and 756 to 790 (DPPKQRCRAPACDHFGNAKCNGYCNECFQFKQMYG). Zn(2+) contacts are provided by Cys716, Cys721, Cys733, Cys736, Cys762, Cys767, Cys779, and Cys782.

Belongs to the peptidase C64 family. In terms of assembly, homodimer. Interacts with TNIP1, TAX1BP1 and TRAF2. Interacts with RNF11, ITCH and TAX1BP1 only after TNF stimulation; these interaction are transient and they are lost after 1 hour of stimulation with TNF. Interacts with YWHAZ and YWHAH. Interacts with IKBKG; the interaction is induced by TNF stimulation and by polyubiquitin. Interacts with RIPK1. Interacts with UBE2N; the interaction requires TAX1BP1. Interacts with TRAF6; the interaction is inhibited by HTLV-1 protein Tax. Proteolytically cleaved by MALT1 upon TCR stimulation; disrupts NF-kappa-B inhibitory function and results in increased IL-2 production. It is proposed that only a fraction of TNFAIP3 colocalized with TCR and CBM complex is cleaved, leaving the main TNFAIP3 pool intact.

The protein resides in the cytoplasm. It is found in the nucleus. It localises to the lysosome. The enzyme catalyses Thiol-dependent hydrolysis of ester, thioester, amide, peptide and isopeptide bonds formed by the C-terminal Gly of ubiquitin (a 76-residue protein attached to proteins as an intracellular targeting signal).. Its function is as follows. Ubiquitin-editing enzyme that contains both ubiquitin ligase and deubiquitinase activities. Involved in immune and inflammatory responses signaled by cytokines, such as TNF-alpha and IL-1 beta, or pathogens via Toll-like receptors (TLRs) through terminating NF-kappa-B activity. Essential component of a ubiquitin-editing protein complex, comprising also RNF11, ITCH and TAX1BP1, that ensures the transient nature of inflammatory signaling pathways. In cooperation with TAX1BP1 promotes disassembly of E2-E3 ubiquitin protein ligase complexes in IL-1R and TNFR-1 pathways; affected are at least E3 ligases TRAF6, TRAF2 and BIRC2, and E2 ubiquitin-conjugating enzymes UBE2N and UBE2D3. In cooperation with TAX1BP1 promotes ubiquitination of UBE2N and proteasomal degradation of UBE2N and UBE2D3. Upon TNF stimulation, deubiquitinates 'Lys-63'-polyubiquitin chains on RIPK1 and catalyzes the formation of 'Lys-48'-polyubiquitin chains. This leads to RIPK1 proteasomal degradation and consequently termination of the TNF- or LPS-mediated activation of NF-kappa-B. Deubiquitinates TRAF6 probably acting on 'Lys-63'-linked polyubiquitin. Upon T-cell receptor (TCR)-mediated T-cell activation, deubiquitinates 'Lys-63'-polyubiquitin chains on MALT1 thereby mediating disassociation of the CBM (CARD11:BCL10:MALT1) and IKK complexes and preventing sustained IKK activation. Deubiquitinates NEMO/IKBKG; the function is facilitated by TNIP1 and leads to inhibition of NF-kappa-B activation. Upon stimulation by bacterial peptidoglycans, probably deubiquitinates RIPK2. Can also inhibit I-kappa-B-kinase (IKK) through a non-catalytic mechanism which involves polyubiquitin; polyubiquitin promotes association with IKBKG and prevents IKK MAP3K7-mediated phosphorylation. Targets TRAF2 for lysosomal degradation. In vitro able to deubiquitinate 'Lys-11'-, 'Lys-48'- and 'Lys-63' polyubiquitin chains. Inhibitor of programmed cell death. Has a role in the function of the lymphoid system. Required for LPS-induced production of pro-inflammatory cytokines and IFN beta in LPS-tolerized macrophages. This Homo sapiens (Human) protein is Tumor necrosis factor alpha-induced protein 3 (TNFAIP3).